The sequence spans 351 residues: MVPTEKLAQITERFEYIEARMAAGAAGEDIAALGREYAELKPVVAEIAAYSRARADLAEAEAMLDDPEMRALAEEEIPALKARIPEMEQALRLALLPKDAADARPAMIEIRPGTGGEEAALFAGDLLRMYQRYAEAQGWRFQIVSESLTELGGIKEVIAHVSGSGVFAKLKYESGVHRVQRVPVTESGGRIHTSAATVAVLPEAEAVDIDIPASDIRIDTMRASGAGGQHVNTTDSAVRITHIPTGLVVTSSEKSQHRNRDIAMQVLRARLYDLERQRADAERSAARKGQVGSGDRSERIRTYNFPQGRMTDHRINLTLYKLDQVMQGDLDEVIAALAADDQARLLAEVEG.

Q229 is subject to N5-methylglutamine.

It belongs to the prokaryotic/mitochondrial release factor family. Methylated by PrmC. Methylation increases the termination efficiency of RF1.

The protein localises to the cytoplasm. Its function is as follows. Peptide chain release factor 1 directs the termination of translation in response to the peptide chain termination codons UAG and UAA. The sequence is that of Peptide chain release factor 1 from Dinoroseobacter shibae (strain DSM 16493 / NCIMB 14021 / DFL 12).